Reading from the N-terminus, the 388-residue chain is MAKGNKIPLTFHTYQDAATGTEVVRLTPPDVICHRNYFYQKCFFNDGSKLLFGAAFDGPWNYYLLDLKEQNATQLTEGKGDNTFGGFLSPNDDALYYVKNTRNLMRVDLTTLEEKTIYQVPDDWVGYGTWVANSDCTKMVGIEIKKEDWKPLTDWKKFQEFYFTNPCCRLIRVDLVTGEAETILQENQWLGHPIYRPGDDNTVAFCHEGPHDLVDARMWFINEDGTNMRKVKEHAEGESCTHEFWVPDGSAMIYVSYLKDDTNRYIRSIDPVTLEDRQLRVMPPCSHLMSNYDGTLLVGDGSDAPVDVQDDGGYKIENDPFLYVFNLKTGKEHRIAQHNTSWEVLEGDRQVTHPHPSFTPDNKQVLFTSDVDGKPALYLAKVPDSVWN.

Its subcellular location is the periplasm. The enzyme catalyses 4-(4-deoxy-alpha-D-galact-4-enuronosyl)-D-galacturonate = 2 5-dehydro-4-deoxy-D-glucuronate. Its pathway is glycan metabolism; pectin degradation; 2-dehydro-3-deoxy-D-gluconate from pectin: step 3/5. Its function is as follows. Involved in degradation of pectin, which causes soft-rod disease in plants. In Pectobacterium atrosepticum (strain SCRI 1043 / ATCC BAA-672) (Erwinia carotovora subsp. atroseptica), this protein is Oligogalacturonide lyase (ogl).